Reading from the N-terminus, the 419-residue chain is L-rhamnose isomerase (419 aa).

Mn(2+)-binding residues include His262, Asp294, and Asp296.

This sequence belongs to the rhamnose isomerase family. Homotetramer. Requires Mn(2+) as cofactor.

It localises to the cytoplasm. The enzyme catalyses L-rhamnopyranose = L-rhamnulose. It participates in carbohydrate degradation; L-rhamnose degradation; glycerone phosphate from L-rhamnose: step 1/3. In terms of biological role, catalyzes the interconversion of L-rhamnose and L-rhamnulose. The sequence is that of L-rhamnose isomerase from Klebsiella pneumoniae (strain 342).